A 236-amino-acid polypeptide reads, in one-letter code: Phospholipid hydroperoxide glutathione peroxidase 1, chloroplastic (236 aa).

Positions 1-16 (MVSMTTSSSSYGTFST) are enriched in low complexity. Positions 1-24 (MVSMTTSSSSYGTFSTVVNSSRPN) are disordered. The transit peptide at 1–64 (MVSMTTSSSS…PINPGFLFKS (64 aa)) directs the protein to the chloroplast. Cys111 is a catalytic residue.

Belongs to the glutathione peroxidase family. As to expression, expressed in leaves, stems, flowers, green siliques and seeds.

It is found in the plastid. It localises to the chloroplast. It catalyses the reaction a hydroperoxy polyunsaturated fatty acid + 2 glutathione = a hydroxy polyunsaturated fatty acid + glutathione disulfide + H2O. In terms of biological role, protects cells and enzymes from oxidative damage, by catalyzing the reduction of hydrogen peroxide, lipid peroxides and organic hydroperoxide, by glutathione. The polypeptide is Phospholipid hydroperoxide glutathione peroxidase 1, chloroplastic (GPX1) (Arabidopsis thaliana (Mouse-ear cress)).